The sequence spans 486 residues: Betaine aldehyde dehydrogenase (486 aa).

Residues T23 and D90 each coordinate K(+). An NAD(+)-binding site is contributed by 147 to 149 (GAW). The Charge relay system role is filled by K159. Residues 173 to 176 (KPSE) and 226 to 229 (ESGT) contribute to the NAD(+) site. Residue L241 participates in K(+) binding. Residue E247 is the Proton acceptor of the active site. NAD(+)-binding residues include G249, C281, and E382. C281 (nucleophile) is an active-site residue. C281 is subject to Cysteine sulfenic acid (-SOH). 2 residues coordinate K(+): K452 and G455. E459 (charge relay system) is an active-site residue.

This sequence belongs to the aldehyde dehydrogenase family. Dimer of dimers. K(+) serves as cofactor.

It carries out the reaction betaine aldehyde + NAD(+) + H2O = glycine betaine + NADH + 2 H(+). It functions in the pathway amine and polyamine biosynthesis; betaine biosynthesis via choline pathway; betaine from betaine aldehyde: step 1/1. Functionally, involved in the biosynthesis of the osmoprotectant glycine betaine. Catalyzes the irreversible oxidation of betaine aldehyde to the corresponding acid. In Vibrio campbellii (strain ATCC BAA-1116), this protein is Betaine aldehyde dehydrogenase.